We begin with the raw amino-acid sequence, 516 residues long: Ribonuclease Y (516 aa).

A helical membrane pass occupies residues 1 to 21; that stretch reads MLIKIVIACVITAIIVALIAW. The 64-residue stretch at 206 to 269 folds into the KH domain; the sequence is TISVVQLPND…ETARIALEKL (64 aa). One can recognise an HD domain in the interval 332 to 425; that stretch reads ALKHSIEVAI…VQAADTISAA (94 aa).

It belongs to the RNase Y family.

It localises to the cell membrane. Endoribonuclease that initiates mRNA decay. This Lachnoclostridium phytofermentans (strain ATCC 700394 / DSM 18823 / ISDg) (Clostridium phytofermentans) protein is Ribonuclease Y.